A 227-amino-acid chain; its full sequence is Ribonuclease 3 (227 aa).

The region spanning 4–133 (FEKLEKLLSY…LIAAIYLDSN (130 aa)) is the RNase III domain. Position 46 (glutamate 46) interacts with Mg(2+). Aspartate 50 is an active-site residue. 2 residues coordinate Mg(2+): asparagine 119 and glutamate 122. Residue glutamate 122 is part of the active site. A DRBM domain is found at 158-226 (DPKTALQEWA…ARSLLHRLKN (69 aa)).

The protein belongs to the ribonuclease III family. As to quaternary structure, homodimer. Requires Mg(2+) as cofactor.

Its subcellular location is the cytoplasm. The catalysed reaction is Endonucleolytic cleavage to 5'-phosphomonoester.. Functionally, digests double-stranded RNA. Involved in the processing of primary rRNA transcript to yield the immediate precursors to the large and small rRNAs (23S and 16S). Processes some mRNAs, and tRNAs when they are encoded in the rRNA operon. Processes pre-crRNA and tracrRNA of type II CRISPR loci if present in the organism. The chain is Ribonuclease 3 from Rickettsia conorii (strain ATCC VR-613 / Malish 7).